The sequence spans 552 residues: Cation transporter HKT1;1 (552 aa).

Residues 1-70 (MHPPSLVLDT…QSYSFLVCKS (70 aa)) are Cytoplasmic-facing. 2 helical membrane-spanning segments follow: residues 71-91 (NPLV…FLAL) and 133-153 (LWVL…MLGL). Over 154–221 (YFNNANANRN…TYNPCAVLVR (68 aa)) the chain is Cytoplasmic. Transmembrane regions (helical) follow at residues 222–242 (IVTG…IIYF) and 291–311 (VLLL…SPLL). Residues 312–348 (RLCVWVLGKVSGKAEYAYILQHPGETGYKHLHVRRNS) are Cytoplasmic-facing. Transmembrane regions (helical) follow at residues 349-369 (VYIV…ICSF) and 402-422 (ILDI…VMYL). The Cytoplasmic portion of the chain corresponds to 423-448 (PSDASFLTANADNQPLTDKKTNSISR). 2 helical membrane passes run 449-471 (ALWR…LACI) and 524-544 (GFVG…MFLG). At 545–552 (RLKEFILK) the chain is on the cytoplasmic side.

Belongs to the TrkH potassium transport family. HKT (TC 2.A.38.3) subfamily. Expressed in shoots. In roots, expressed in epidermis, exodermis, cortex, and sieve elements and companion cells of phloem. In mature leaves, expressed in large highly vacuolated cells of the adaxial epidermis, phloem and xylem.

The protein resides in the membrane. It catalyses the reaction Na(+)(in) = Na(+)(out). Functionally, functions as a low-affinity sodium transporter. The sequence is that of Cation transporter HKT1;1 from Oryza sativa subsp. japonica (Rice).